The following is a 499-amino-acid chain: MSSVCALLLSCALFLVAHGSLQERRLYEDLMRNYNNLERPVANHSEPVTVHLKVALQQIIDVDEKNQVVYVNAWLDYTWKDYNLVWDQAEYGNITDVRFPAGKIWKPDVLLYNSVDTNFDSTYQTNMIVYSSGLVHWVPPGIFKISCKIDIQWFPFDEQKCFFKFGSWTYDGYKLDLQPATGGFDISEYLPNGEWALPLTTVERNEKFYDCCPEPYPDVHFYLHMRRRTLYYGFNLIMPCILTTLMTLLGFTLPPDAGEKITLQITVLLSICFFLSIVSEMSPPTSEAVPLLGIFFTCCMIVVTASTVFTVYVLNLHYRTPETHDMGPWTRNLLLYWIPWILRMKRPGHNLTYASLPSLFASKPNRHSESLIRNIKDNEHSLSRANSFDADCRLNQYIMTQSVSNGLTSMGSIPSTMISSTNGALTDVSQQATLLILHRIYHELKIVTKRMIEGDKEEQASNNWKFAAMVVDRLCLYVFTIFIIASTIGIFWSAPYLVA.

Residues 1–19 (MSSVCALLLSCALFLVAHG) form the signal peptide. The Extracellular segment spans residues 20–232 (SLQERRLYED…LHMRRRTLYY (213 aa)). N-linked (GlcNAc...) asparagine glycans are attached at residues N43 and N93. Intrachain disulfides connect C147/C161 and C211/C212. Transmembrane regions (helical) follow at residues 233-253 (GFNL…GFTL), 261-281 (ITLQ…VSEM), and 289-309 (VPLL…STVF). Residues 310 to 473 (TVYVLNLHYR…WKFAAMVVDR (164 aa)) are Cytoplasmic-facing. The chain crosses the membrane as a helical span at residues 474–494 (LCLYVFTIFIIASTIGIFWSA). Topologically, residues 495–499 (PYLVA) are extracellular.

This sequence belongs to the ligand-gated ion channel (TC 1.A.9) family. Acetylcholine receptor (TC 1.A.9.1) subfamily.

It localises to the postsynaptic cell membrane. The protein resides in the cell membrane. In terms of biological role, after binding acetylcholine, the AChR responds by an extensive change in conformation that affects all subunits and leads to opening of an ion-conducting channel across the plasma membrane. A subunit of the levamisole-insensitive nicotinic receptor. This is Acetylcholine receptor subunit alpha-type acr-16 from Caenorhabditis briggsae.